The sequence spans 852 residues: MQNLDIRKAYLDFFKSKGHEVVASAPLVPNDATLLFTNAGMVPFKSIFTGEVPRPTPPIRTSCQTCIRAGGKHNDLDNVGYTARHHTFFEMLGNFSFGEYFKKEAIAYAWEFVTEVLKLPKDKLYVTVHESDYEAFEIWSTHIAKERIYRFGDHDNFWQMGDTGPCGPCSEIFYDQGAEHFNTPEDYMGGDGDRFLEIWNLVFMQYERSADGKLSPLPKPSIDTGMGLERVTAILQGKFSNYDSTLFMPLISEVAKLCGKPYVYESGASYRVISDHIRSVTFLLAQGTTFDKEGRGYVLRRILRRAIRHGYLLGIKEPFMYKLVDKVCELMGGHYTYLNDKKAAVKEQIKLEEERFLATIASGLELFESELKNTKEIFSGEAAFKLYDTFGFPLDLTADMLREKGLKVDEARFDELMSEQKARAKAAWKGSGDKSAKGDFKELLEKFGENKFIGYEELKSKSKILALLDEEFKNIDGLDAGKEGWVMFDVTPFYAQSGGQCGDNGKIVGKADVLDTEKFHGLNLSLVKTSAALKVGDEVELEVGSDRAETARHHSATHLLHAALRAVVGTHIAQAGSNVEADRLRFDFSHPKALSGEEISKVENLVNEWIVNGANAKTQVMELEEAKKSGAIALFNEKYADKVRVVSFGDVSKELCGGTHVKNIDEIGSFFITKESGVSAGVRRIEAVCSRAALNLARSFRAELEELKEELKSAEPLNAVKKLKGEIKGLKDKLKNAKNSHALAFLNVNDTKLCVASIDSGDIKTLIDEFKNEHEKAAILLIQVDEEGKISLAAGVKNAPIKAGAWVKFAAQILGGNGGGKDDFATAGGKNALAIEDAIRSSVEYARQALEK.

Positions 554, 558, 656, and 660 each coordinate Zn(2+).

The protein belongs to the class-II aminoacyl-tRNA synthetase family. Zn(2+) is required as a cofactor.

Its subcellular location is the cytoplasm. The catalysed reaction is tRNA(Ala) + L-alanine + ATP = L-alanyl-tRNA(Ala) + AMP + diphosphate. Catalyzes the attachment of alanine to tRNA(Ala) in a two-step reaction: alanine is first activated by ATP to form Ala-AMP and then transferred to the acceptor end of tRNA(Ala). Also edits incorrectly charged Ser-tRNA(Ala) and Gly-tRNA(Ala) via its editing domain. The protein is Alanine--tRNA ligase of Campylobacter concisus (strain 13826).